The primary structure comprises 638 residues: Acetolactate synthase 2, chloroplastic (638 aa).

A chloroplast-targeting transit peptide spans 1 to 39 (MATAATAAAALTGATTATPKSRRRAHHLATRRALAAPIR). The disordered stretch occupies residues 44–67 (SRATPTAPPATPLRPWGPNEPRKG). Glutamate 112 contributes to the thiamine diphosphate binding site. A disulfide bond links cysteine 132 and cysteine 278. Residues arginine 214, 320 to 341 (HGTV…FGVR), and 363 to 382 (DIDP…ICAD) each bind FAD. Positions 455–535 (QHQMWAAQYY…VKVFVLNNQH (81 aa)) are thiamine pyrophosphate binding. Residues aspartate 506 and asparagine 533 each contribute to the Mg(2+) site.

This sequence belongs to the TPP enzyme family. Mg(2+) serves as cofactor. It depends on thiamine diphosphate as a cofactor.

It is found in the plastid. It localises to the chloroplast. It catalyses the reaction 2 pyruvate + H(+) = (2S)-2-acetolactate + CO2. It participates in amino-acid biosynthesis; L-isoleucine biosynthesis; L-isoleucine from 2-oxobutanoate: step 1/4. It functions in the pathway amino-acid biosynthesis; L-valine biosynthesis; L-valine from pyruvate: step 1/4. This is Acetolactate synthase 2, chloroplastic (ALS2) from Zea mays (Maize).